A 206-amino-acid chain; its full sequence is ATP phosphoribosyltransferase (206 aa).

It belongs to the ATP phosphoribosyltransferase family. Short subfamily. As to quaternary structure, heteromultimer composed of HisG and HisZ subunits.

It localises to the cytoplasm. The catalysed reaction is 1-(5-phospho-beta-D-ribosyl)-ATP + diphosphate = 5-phospho-alpha-D-ribose 1-diphosphate + ATP. The protein operates within amino-acid biosynthesis; L-histidine biosynthesis; L-histidine from 5-phospho-alpha-D-ribose 1-diphosphate: step 1/9. Its function is as follows. Catalyzes the condensation of ATP and 5-phosphoribose 1-diphosphate to form N'-(5'-phosphoribosyl)-ATP (PR-ATP). Has a crucial role in the pathway because the rate of histidine biosynthesis seems to be controlled primarily by regulation of HisG enzymatic activity. The sequence is that of ATP phosphoribosyltransferase from Sulfurovum sp. (strain NBC37-1).